We begin with the raw amino-acid sequence, 908 residues long: Chloride channel protein 2 (908 aa).

Residues 1 to 95 are Cytoplasmic-facing; it reads MAAATAAAAA…RCHKFLVSRV (95 aa). Residues 24–42 form an essential for channel gating by both voltage and cell volume region; that stretch reads QYEQTLMYGRYTQELGAFA. Threonine 28 is modified (phosphothreonine). The interval 44–57 is modulates channel gating by both voltage and cell volume; the sequence is EEAARIRLGGPEPW. 2 helical membrane passes run 96–129 and 138–163; these read GEDW…AQQW and ILLQ…TQIL. A Selectivity filter part_1 motif is present at residues 169-173; the sequence is GSGIP. Serine 170 contacts chloride. The segment at residues 172-179 is an intramembrane region (helical); that stretch reads IPEMKTIL. 2 consecutive transmembrane segments (helical) span residues 188 to 206 and 213 to 231; these read LTLK…ALGS and EGPF…SKFL. The short motif at 211-215 is the Selectivity filter part_2 element; sequence GKEGP. Intramembrane regions (helical) lie at residues 247-259 and 263-271; these read MLAA…VGCC and PIGGVLFSI. 5 consecutive transmembrane segments (helical) span residues 283 to 303, 329 to 357, 366 to 385, 437 to 457, and 465 to 488; these read YWRG…LAVW, LPAF…VQVM, FLMR…ISTL, ANVF…SALA, and GAFM…MAAW. The short motif at 465–469 is the Selectivity filter part_3 element; it reads GAFMP. Phenylalanine 467 provides a ligand contact to chloride. An intramembrane region (helical) is located at residues 505–519; sequence GGYAVVGAAALAGAV. The note=Loop between two helices intramembrane region spans 520-521; sequence TH. Residues 522-533 constitute an intramembrane region (helical); it reads TVSTAVIVFELT. An intramembrane region (note=Loop between two helices) is located at residues 534 to 538; sequence GQIAH. The helical transmembrane segment at 539–556 threads the bilayer; sequence ILPVMIAVILANAVAQSL. At 557 to 908 the chain is on the cytoplasmic side; the sequence is QPSLYDSIIR…TPSDSDDKCQ (352 aa). Residue tyrosine 561 coordinates chloride. One can recognise a CBS 1 domain in the interval 592-650; it reads MVRDVPHVALSCTFRDLRLALHRTKGRMLALVESPESMILLGSIERSQVVALLGAQLSP. Residues 653-662 show a composition bias toward basic residues; that stretch reads RRQHMQKLRK. A disordered region spans residues 653-722; it reads RRQHMQKLRK…NSTSLQEGTT (70 aa). The segment covering 666–680 has biased composition (low complexity); it reads SPPSDQESPPSSETS. Residues 681-690 are compositionally biased toward polar residues; that stretch reads IRFQVNTEDS. Basic residues predominate over residues 698 to 707; it reads QTHKPLKPAL. The span at 711-722 shows a compositional bias: polar residues; the sequence is PSNSTSLQEGTT. Phosphoserine is present on serine 768. One can recognise a CBS 2 domain in the interval 800–860; it reads IDPAPFQLVE…GSVTAQGVKV (61 aa). Residues 822-823 carry the Basolateral membrane sorting motif; it reads LL. The tract at residues 866 to 908 is disordered; it reads SFRDSATSSSDTETTEVHALWGPRSRHGLPREGTPSDSDDKCQ.

It belongs to the chloride channel (TC 2.A.49) family. ClC-2/CLCN2 subfamily. Homodimer. Interacts with auxiliary subunit HEPACAM. In terms of processing, phosphorylated. Activated by dephosphorylation. In terms of tissue distribution, expressed in the adrenal gland and brain. Expressed in intestinal epithelium (at protein level). Expressed in salivary gland (at protein level).

It is found in the cell membrane. The protein resides in the myelin membrane. Its subcellular location is the basolateral cell membrane. The protein localises to the cell projection. It localises to the dendritic spine membrane. It is found in the axon. It carries out the reaction chloride(in) = chloride(out). The enzyme catalyses thiocyanate(in) = thiocyanate(out). The catalysed reaction is bromide(in) = bromide(out). It catalyses the reaction nitrate(in) = nitrate(out). It carries out the reaction iodide(out) = iodide(in). With respect to regulation, common gate kinetics are down-regulated by intracellular ATP. Inhibited by AK-42, a derivative of meclofenamate. Inhibited by Cd(2+). Inhibited by Zn(2+) and PKC activation. Inhibited at acidic pH. CCLN2:HEPACAM channel conductance is up-regulated upon hypo-osmolarity. Voltage-gated and osmosensitive chloride channel. Forms a homodimeric channel where each subunit has its own ion conduction pathway. Conducts double-barreled currents controlled by two types of gates, two fast glutamate gates that control each subunit independently and a slow common gate that opens and shuts off both subunits simultaneously. Displays inward rectification currents activated upon membrane hyperpolarization and extracellular hypotonicity. Contributes to chloride conductance involved in neuron excitability. In hippocampal neurons, generates a significant part of resting membrane conductance and provides an additional chloride efflux pathway to prevent chloride accumulation in dendrites upon GABA receptor activation. In glia, associates with the auxiliary subunit HEPACAM/GlialCAM at astrocytic processes and myelinated fiber tracts where it may regulate transcellular chloride flux buffering extracellular chloride and potassium concentrations. Regulates aldosterone production in adrenal glands. The opening of CLCN2 channels at hyperpolarized membrane potentials in the glomerulosa causes cell membrane depolarization, activation of voltage-gated calcium channels and increased expression of aldosterone synthase, the rate-limiting enzyme for aldosterone biosynthesis. Contributes to chloride conductance in retinal pigment epithelium involved in phagocytosis of shed photoreceptor outer segments and photoreceptor renewal. Conducts chloride currents at the basolateral membrane of epithelial cells with a role in chloride reabsorption rather than secretion. Permeable to small monovalent anions with chloride &gt; thiocyanate &gt; bromide &gt; nitrate &gt; iodide ion selectivity. This is Chloride channel protein 2 (Clcn2) from Mus musculus (Mouse).